A 638-amino-acid polypeptide reads, in one-letter code: Threonine--tRNA ligase (638 aa).

The TGS domain maps to 1-61 (MPIITLPDGS…NSDSKVVIIT (61 aa)). The catalytic stretch occupies residues 242-533 (DHRKLGKKHS…LIEQYEAKFP (292 aa)). 3 residues coordinate Zn(2+): Cys-333, His-384, and His-510.

Belongs to the class-II aminoacyl-tRNA synthetase family. As to quaternary structure, homodimer. Zn(2+) serves as cofactor.

The protein resides in the cytoplasm. It catalyses the reaction tRNA(Thr) + L-threonine + ATP = L-threonyl-tRNA(Thr) + AMP + diphosphate + H(+). Its function is as follows. Catalyzes the attachment of threonine to tRNA(Thr) in a two-step reaction: L-threonine is first activated by ATP to form Thr-AMP and then transferred to the acceptor end of tRNA(Thr). Also edits incorrectly charged L-seryl-tRNA(Thr). The polypeptide is Threonine--tRNA ligase (Prochlorococcus marinus (strain MIT 9215)).